The following is a 481-amino-acid chain: RuvB-like helicase 2 (481 aa).

G76–T83 serves as a coordination point for ATP.

The protein belongs to the RuvB family. May form heterododecamers with hel-1/rvb1. Component of the SWR1 chromatin remodeling complex, the INO80 chromatin remodeling complex, and of the R2TP complex.

It localises to the nucleus. It catalyses the reaction ATP + H2O = ADP + phosphate + H(+). Its function is as follows. DNA helicase which participates in several chromatin remodeling complexes, including the SWR1 and the INO80 complexes. The SWR1 complex mediates the ATP-dependent exchange of histone H2A for the H2A variant H2A.Z leading to transcriptional regulation of selected genes by chromatin remodeling. The INO80 complex remodels chromatin by shifting nucleosomes and is involved in DNA repair. Also involved in pre-rRNA processing. This Neurospora crassa (strain ATCC 24698 / 74-OR23-1A / CBS 708.71 / DSM 1257 / FGSC 987) protein is RuvB-like helicase 2 (hel-2).